Reading from the N-terminus, the 362-residue chain is Carbamoyl phosphate synthase small chain (362 aa).

The tract at residues 1–172 (MKAFLVLDNG…SKYIFGTHTG (172 aa)) is CPSase. The L-glutamine site is built by Ser-45, Gly-224, and Gly-226. In terms of domain architecture, Glutamine amidotransferase type-1 spans 176–362 (KLAVYDYGVK…YDLVEKTKKG (187 aa)). Cys-252 functions as the Nucleophile in the catalytic mechanism. Positions 253, 256, 294, 296, and 297 each coordinate L-glutamine. Catalysis depends on residues His-335 and Glu-337.

The protein belongs to the CarA family. As to quaternary structure, composed of two chains; the small (or glutamine) chain promotes the hydrolysis of glutamine to ammonia, which is used by the large (or ammonia) chain to synthesize carbamoyl phosphate. Tetramer of heterodimers (alpha,beta)4.

It carries out the reaction hydrogencarbonate + L-glutamine + 2 ATP + H2O = carbamoyl phosphate + L-glutamate + 2 ADP + phosphate + 2 H(+). The catalysed reaction is L-glutamine + H2O = L-glutamate + NH4(+). It functions in the pathway amino-acid biosynthesis; L-arginine biosynthesis; carbamoyl phosphate from bicarbonate: step 1/1. It participates in pyrimidine metabolism; UMP biosynthesis via de novo pathway; (S)-dihydroorotate from bicarbonate: step 1/3. Its function is as follows. Small subunit of the glutamine-dependent carbamoyl phosphate synthetase (CPSase). CPSase catalyzes the formation of carbamoyl phosphate from the ammonia moiety of glutamine, carbonate, and phosphate donated by ATP, constituting the first step of 2 biosynthetic pathways, one leading to arginine and/or urea and the other to pyrimidine nucleotides. The small subunit (glutamine amidotransferase) binds and cleaves glutamine to supply the large subunit with the substrate ammonia. In Leptospira interrogans serogroup Icterohaemorrhagiae serovar Lai (strain 56601), this protein is Carbamoyl phosphate synthase small chain.